A 152-amino-acid chain; its full sequence is Calmodulin-like protein 2 (152 aa).

EF-hand domains lie at 1 to 36 (MDRGELSRVFQMFDKNGDGKIAKNELKDFFKSVGIM), 37 to 72 (VPENEINEMIAKMDVNGDGAMDIDEFGSLYQEMVEE), 74 to 109 (EEEEDMREAFRVFDQNGDGFITDEELRSVLASMGLK), and 112 to 147 (RTLEDCKKMISKVDVDGDGMVNFKEFKQMMRGGGFA). The Ca(2+) site is built by D14, N16, D18, K20, E25, D50, N52, D54, E61, D87, N89, D91, E98, D125, D127, D129, M131, and E136.

This sequence belongs to the calmodulin family.

In terms of biological role, potential calcium sensor that is required for pollen tube attraction for ovule fertilization. This Arabidopsis thaliana (Mouse-ear cress) protein is Calmodulin-like protein 2 (CML2).